A 77-amino-acid chain; its full sequence is U8-lycotoxin-Ls1b (77 aa).

The first 20 residues, M1 to A20, serve as a signal peptide directing secretion. Positions Q21–K26 are excised as a propeptide.

The protein belongs to the neurotoxin 19 (CSTX) family. 08 (U8-Lctx) subfamily. Post-translationally, contains 4 disulfide bonds. In terms of tissue distribution, expressed by the venom gland.

It localises to the secreted. This is U8-lycotoxin-Ls1b from Lycosa singoriensis (Wolf spider).